The following is a 200-amino-acid chain: LHFPL tetraspan subfamily member 6 protein (200 aa).

A signal peptide spans 1–21; that stretch reads MASSLTCAGVIWALLSFLCAA. 2 helical membrane-spanning segments follow: residues 84–104 and 123–143; these read ICTV…LTAI and GIQF…PLGW. Asn-154 carries an N-linked (GlcNAc...) asparagine glycan. A helical membrane pass occupies residues 172-192; it reads CTGAGAAAAMVLCTWMACFAG.

This sequence belongs to the LHFP family.

It localises to the membrane. The sequence is that of LHFPL tetraspan subfamily member 6 protein from Danio rerio (Zebrafish).